The chain runs to 257 residues: Flap endonuclease Xni (257 aa).

Aspartate 112 is a Mg(2+) binding site. Residues 169–256 (EQKKLVEFWA…LGFSLKQLRL (88 aa)) enclose the 5'-3' exonuclease domain. K(+) contacts are provided by phenylalanine 179, alanine 180, proline 188, valine 190, and isoleucine 193. The tract at residues 192–197 (GIGTKS) is interaction with DNA.

This sequence belongs to the Xni family. The cofactor is Mg(2+). Requires K(+) as cofactor.

Has flap endonuclease activity. During DNA replication, flap endonucleases cleave the 5'-overhanging flap structure that is generated by displacement synthesis when DNA polymerase encounters the 5'-end of a downstream Okazaki fragment. This chain is Flap endonuclease Xni, found in Pseudoalteromonas translucida (strain TAC 125).